Consider the following 1020-residue polypeptide: Fanconi-associated nuclease 1 (1020 aa).

A compositionally biased stretch (basic and acidic residues) spans 1 to 11; that stretch reads MPSQRKSPDQK. Positions 1-24 are disordered; sequence MPSQRKSPDQKRPRRSLSTSKTAK. Positions 14-22 match the D-box motif; it reads RRSLSTSKT. A UBZ4-type zinc finger spans residues 41–69; the sequence is KLACSTCHKMVPRYDLIRHLDESCANNGV. Residues Cys-44, Cys-47, His-59, and Cys-64 each contribute to the Zn(2+) site. The segment at 173-208 is disordered; sequence KNEGLASQCPQTSPSTPGTSLTDNCPEMEDKDEVLN. A compositionally biased stretch (polar residues) spans 180–195; sequence QCPQTSPSTPGTSLTD. Residues 212–214 carry the KEN box motif; it reads KEN. Over residues 224 to 242 the composition is skewed to basic and acidic residues; the sequence is ENASEQKVKNNKITGDESQ. 2 disordered regions span residues 224–252 and 269–288; these read ENAS…PALT and LVSN…ESAR. The span at 269–278 shows a compositional bias: polar residues; it reads LVSNTKSSPG. A coiled-coil region spans residues 673–737; sequence SSRAVEVLER…AIRCIREGLA (65 aa). Mn(2+) is bound by residues Glu-837, Asp-963, Glu-978, and Val-979. One can recognise a VRR-NUC domain in the interval 898 to 1010; that stretch reads AESLRAWVGE…GADVEVCHVV (113 aa).

Belongs to the FAN1 family. In terms of assembly, interacts with FANCD2 (when monoubiquitinated). Interacts with FANCI, MLH1, MLH3 and PMS2. It depends on Mn(2+) as a cofactor. Mg(2+) is required as a cofactor. Ubiquitinated and degraded during mitotic exit by the APC/C-Cdh1 complex.

The protein resides in the nucleus. It carries out the reaction Hydrolytically removes 5'-nucleotides successively from the 3'-hydroxy termini of 3'-hydroxy-terminated oligonucleotides.. Nuclease required for the repair of DNA interstrand cross-links (ICL) recruited at sites of DNA damage by monoubiquitinated FANCD2. Specifically involved in repair of ICL-induced DNA breaks by being required for efficient homologous recombination, probably in the resolution of homologous recombination intermediates. Not involved in DNA double-strand breaks resection. Acts as a 5'-3' exonuclease that anchors at a cut end of DNA and cleaves DNA successively at every third nucleotide, allowing to excise an ICL from one strand through flanking incisions. Probably keeps excising with 3'-flap annealing until it reaches and unhooks the ICL. Acts at sites that have a 5'-terminal phosphate anchor at a nick or a 1- or 2-nucleotide flap and is augmented by a 3' flap. Also has endonuclease activity toward 5'-flaps. This chain is Fanconi-associated nuclease 1, found in Mus musculus (Mouse).